A 1070-amino-acid chain; its full sequence is DNA-directed RNA polymerase subunit beta (1070 aa).

It belongs to the RNA polymerase beta chain family. As to quaternary structure, in plastids the minimal PEP RNA polymerase catalytic core is composed of four subunits: alpha, beta, beta', and beta''. When a (nuclear-encoded) sigma factor is associated with the core the holoenzyme is formed, which can initiate transcription.

Its subcellular location is the plastid. It localises to the chloroplast. The enzyme catalyses RNA(n) + a ribonucleoside 5'-triphosphate = RNA(n+1) + diphosphate. In terms of biological role, DNA-dependent RNA polymerase catalyzes the transcription of DNA into RNA using the four ribonucleoside triphosphates as substrates. The chain is DNA-directed RNA polymerase subunit beta from Vitis vinifera (Grape).